The primary structure comprises 474 residues: N-lysine methyltransferase SETD6 (474 aa).

Ser-14 is subject to Phosphoserine. The region spanning 63-287 (PKVLVSRQGT…KGHEIFNTYG (225 aa)) is the SET domain. Lys-64 carries the post-translational modification N6-methylated lysine; by autocatalysis. 74–76 (AGY) contacts S-adenosyl-L-methionine. Trp-123 serves as a coordination point for substrate. At Lys-180 the chain carries N6-methylated lysine; by autocatalysis. Tyr-224 serves as a coordination point for S-adenosyl-L-methionine. The substrate site is built by Ser-225 and Gln-227. Residues 252-253 (NH) and Tyr-298 each bind S-adenosyl-L-methionine. Lys-373 carries the post-translational modification N6-methylated lysine; by autocatalysis.

This sequence belongs to the class V-like SAM-binding methyltransferase superfamily. Histone-lysine methyltransferase family. SETD6 subfamily. Monomer, homodimer and homotrimer; these structures are stabilized in the presence of S-adenosyl-L-methionine (SAM). Post-translationally, automethylated.

It is found in the nucleus. The catalysed reaction is L-lysyl-[protein] + S-adenosyl-L-methionine = N(6)-methyl-L-lysyl-[protein] + S-adenosyl-L-homocysteine + H(+). It carries out the reaction L-lysyl(8)-[histone H2AZ] + S-adenosyl-L-methionine = N(6)-methyl-L-lysyl(8)-[histone H2AZ] + S-adenosyl-L-homocysteine + H(+). Protein-lysine N-methyltransferase. Monomethylates 'Lys-310' of the RELA subunit of NF-kappa-B complex, leading to down-regulation of NF-kappa-B transcription factor activity. Monomethylates 'Lys-8' of H2AZ (H2AZK8me1). Required for the maintenance of embryonic stem cell self-renewal. Methylates PAK4. In Rattus norvegicus (Rat), this protein is N-lysine methyltransferase SETD6 (Setd6).